A 172-amino-acid chain; its full sequence is Austinoid biosynthesis clusters protein J (172 aa).

This sequence belongs to the trt14 isomerase family. In terms of assembly, homodimer.

It functions in the pathway secondary metabolite biosynthesis; terpenoid biosynthesis. In terms of biological role, part of the gene cluster B that mediates the biosynthesis of the fungal meroterpenoid acetoxydehydroaustin. The first step of the pathway is the synthesis of 3,5-dimethylorsellinic acid by the polyketide synthase ausA. 3,5-dimethylorsellinic acid is then prenylated by the polyprenyl transferase ausN. Further epoxidation by the FAD-dependent monooxygenase ausM and cyclization by the probable terpene cyclase ausL lead to the formation of protoaustinoid A. Protoaustinoid A is then oxidized to spiro-lactone preaustinoid A3 by the combined action of the FAD-binding monooxygenases ausB and ausC, and the dioxygenase ausE. Acid-catalyzed keto-rearrangement and ring contraction of the tetraketide portion of preaustinoid A3 by ausJ lead to the formation of preaustinoid A4. The aldo-keto reductase ausK, with the help of ausH, is involved in the next step by transforming preaustinoid A4 into isoaustinone which is in turn hydroxylated by the P450 monooxygenase ausI to form austinolide. The cytochrome P450 monooxygenase ausG then modifies austinolide to austinol. Austinol is further acetylated to austin by the O-acetyltransferase ausP, which spontaneously changes to dehydroaustin. The cytochrome P450 monooxygenase then converts dehydroaustin is into 7-dehydrodehydroaustin. The hydroxylation catalyzed by ausR permits the second O-acetyltransferase ausQ to add an additional acetyl group to the molecule, leading to the formation of acetoxydehydroaustin. Due to genetic rearrangements of the clusters and the subsequent loss of some enzymes, the end product of the Penicillium brasilianum austinoid biosynthesis clusters is acetoxydehydroaustin. This Penicillium brasilianum protein is Austinoid biosynthesis clusters protein J.